The sequence spans 344 residues: Dimethyladenosine transferase 1, mitochondrial (344 aa).

Residues 1–27 (MATPGALAKFRLPPLPTIGEIVKLFNL) constitute a mitochondrion transit peptide. Residues N36, L38, G63, E85, K86, D111, I112, and N141 each coordinate S-adenosyl-L-methionine.

Belongs to the class I-like SAM-binding methyltransferase superfamily. rRNA adenine N(6)-methyltransferase family. KsgA subfamily.

The protein localises to the mitochondrion. It catalyses the reaction adenosine(N)/adenosine(N+1) in rRNA + 4 S-adenosyl-L-methionine = N(6)-dimethyladenosine(N)/N(6)-dimethyladenosine(N+1) in rRNA + 4 S-adenosyl-L-homocysteine + 4 H(+). In terms of biological role, mitochondrial methyltransferase which uses S-adenosyl methionine to dimethylate two highly conserved adjacent adenosine residues (A1583 and A1584) within the loop of helix 45 at the 3-prime end of 12S rRNA, thereby regulating the assembly or stability of the small subunit of the mitochondrial ribosome. Also required for basal transcription of mitochondrial DNA, probably via its interaction with POLRMT and TFAM. Stimulates transcription independently of the methyltransferase activity. In Xenopus laevis (African clawed frog), this protein is Dimethyladenosine transferase 1, mitochondrial (tfb1m.L).